Reading from the N-terminus, the 194-residue chain is Peptidyl-tRNA hydrolase (194 aa).

Histidine 17 is a tRNA binding site. Histidine 22 acts as the Proton acceptor in catalysis. 3 residues coordinate tRNA: phenylalanine 68, asparagine 70, and asparagine 116.

Belongs to the PTH family. As to quaternary structure, monomer.

Its subcellular location is the cytoplasm. It carries out the reaction an N-acyl-L-alpha-aminoacyl-tRNA + H2O = an N-acyl-L-amino acid + a tRNA + H(+). Its function is as follows. Hydrolyzes ribosome-free peptidyl-tRNAs (with 1 or more amino acids incorporated), which drop off the ribosome during protein synthesis, or as a result of ribosome stalling. In terms of biological role, catalyzes the release of premature peptidyl moieties from peptidyl-tRNA molecules trapped in stalled 50S ribosomal subunits, and thus maintains levels of free tRNAs and 50S ribosomes. This Xanthomonas oryzae pv. oryzae (strain MAFF 311018) protein is Peptidyl-tRNA hydrolase.